The primary structure comprises 660 residues: DNA mismatch repair protein MutL (660 aa).

It belongs to the DNA mismatch repair MutL/HexB family.

This protein is involved in the repair of mismatches in DNA. It is required for dam-dependent methyl-directed DNA mismatch repair. May act as a 'molecular matchmaker', a protein that promotes the formation of a stable complex between two or more DNA-binding proteins in an ATP-dependent manner without itself being part of a final effector complex. In Streptococcus equi subsp. zooepidemicus (strain H70), this protein is DNA mismatch repair protein MutL.